Reading from the N-terminus, the 448-residue chain is Hyaluronidase conohyal-Cn1 (448 aa).

A signal peptide spans 1-18 (MRAVVVVTGLVVVVVATA). Positions 19-33 (LSLPNHDVKSATSSR) are excised as a propeptide. Positions 26-55 (VKSATSSRSSSDYQGSSGDDCDEGLPPPDQ) are disordered. Low complexity predominate over residues 31-43 (SSRSSSDYQGSSG). Cys-67 and Cys-344 form a disulfide bridge. Residue Asn-141 is glycosylated (N-linked (GlcNAc...) asparagine). Catalysis depends on Glu-151, which acts as the Proton donor. N-linked (GlcNAc...) asparagine glycosylation is found at Asn-169 and Asn-361. 3 disulfide bridges follow: Cys-369/Cys-380, Cys-374/Cys-413, and Cys-415/Cys-424. Residues 413 to 424 (CRCYSAWEGACC) enclose the EGF-like domain.

It belongs to the glycosyl hydrolase 56 family. Expressed by the venom duct.

The protein localises to the secreted. The enzyme catalyses Random hydrolysis of (1-&gt;4)-linkages between N-acetyl-beta-D-glucosamine and D-glucuronate residues in hyaluronate.. In terms of biological role, hyaluronidase catalyzes the hydrolysis of hyaluronic acid (HA), an anionic, nonsulfated glycosaminoglycan distributed widely throughout connective, epithelial, and neural tissues. In venom, they are known to enhance diffusion of the venom by degrading the extracellular matrix. The protein is Hyaluronidase conohyal-Cn1 of Conus consors (Singed cone).